Here is a 166-residue protein sequence, read N- to C-terminus: MAINLEDKKAIVAEVNEAAKAALSAVVADARGVTVSAMTGLRKEAREAGVYVRVVRNTLLKRAVADTEYSVLNDVFTGPTLIAFSTDHPGAAARLFKEFAKGQDKFEIKAAAFEGKFLAANQIDVLATLPTRNEAISQLMSVIQGATSKLARTLAAVREQKEAAAA.

The protein belongs to the universal ribosomal protein uL10 family. In terms of assembly, part of the ribosomal stalk of the 50S ribosomal subunit. The N-terminus interacts with L11 and the large rRNA to form the base of the stalk. The C-terminus forms an elongated spine to which L12 dimers bind in a sequential fashion forming a multimeric L10(L12)X complex.

Functionally, forms part of the ribosomal stalk, playing a central role in the interaction of the ribosome with GTP-bound translation factors. The polypeptide is Large ribosomal subunit protein uL10 (Pseudomonas fluorescens (strain SBW25)).